The sequence spans 338 residues: Tetraacyldisaccharide 4'-kinase (338 aa).

ATP is bound at residue 63-70 (TVGGAGKT).

The protein belongs to the LpxK family.

The catalysed reaction is a lipid A disaccharide + ATP = a lipid IVA + ADP + H(+). Its pathway is glycolipid biosynthesis; lipid IV(A) biosynthesis; lipid IV(A) from (3R)-3-hydroxytetradecanoyl-[acyl-carrier-protein] and UDP-N-acetyl-alpha-D-glucosamine: step 6/6. Its function is as follows. Transfers the gamma-phosphate of ATP to the 4'-position of a tetraacyldisaccharide 1-phosphate intermediate (termed DS-1-P) to form tetraacyldisaccharide 1,4'-bis-phosphate (lipid IVA). The chain is Tetraacyldisaccharide 4'-kinase from Hahella chejuensis (strain KCTC 2396).